A 331-amino-acid polypeptide reads, in one-letter code: MARMYYDTDANLDLLAGKTIAIIGYGSQGHAHALNLKDSGINVIVGLYPGSKSAKKAEEAGLKVLSVAEAAQAADWIMILLPDEVQKAVYTHEIAPYLSEGKVLCFAHGFNIHFGQVVPPPTVDVVMIAPKGPGHLVRRTYEQGEGVPCLFAVYQDATGQARDRAMAYAKGIGGTRAGILETTFREETETDLFGEQVVLCGGLSALIKGGFETLVNAGYQPELAYFECLHEVKLIVDLIVEGGLAKMRDSISNTAEYGDLTRGPRIVTDETRAEMKKILREIQTGQFAREFVLENQSGKPGFTAMRRQEAEHPIEEVGKDLRAMFSWLKDK.

The KARI N-terminal Rossmann domain maps to 2–182 (ARMYYDTDAN…GGTRAGILET (181 aa)). Residues 25-28 (YGSQ), Ser51, Ser53, and 83-86 (DEVQ) each bind NADP(+). His108 is an active-site residue. Gly134 contributes to the NADP(+) binding site. The KARI C-terminal knotted domain occupies 183–328 (TFREETETDL…KDLRAMFSWL (146 aa)). 4 residues coordinate Mg(2+): Asp191, Glu195, Glu227, and Glu231. Ser252 lines the substrate pocket.

The protein belongs to the ketol-acid reductoisomerase family. Mg(2+) is required as a cofactor.

The catalysed reaction is (2R)-2,3-dihydroxy-3-methylbutanoate + NADP(+) = (2S)-2-acetolactate + NADPH + H(+). It catalyses the reaction (2R,3R)-2,3-dihydroxy-3-methylpentanoate + NADP(+) = (S)-2-ethyl-2-hydroxy-3-oxobutanoate + NADPH + H(+). It participates in amino-acid biosynthesis; L-isoleucine biosynthesis; L-isoleucine from 2-oxobutanoate: step 2/4. The protein operates within amino-acid biosynthesis; L-valine biosynthesis; L-valine from pyruvate: step 2/4. Functionally, involved in the biosynthesis of branched-chain amino acids (BCAA). Catalyzes an alkyl-migration followed by a ketol-acid reduction of (S)-2-acetolactate (S2AL) to yield (R)-2,3-dihydroxy-isovalerate. In the isomerase reaction, S2AL is rearranged via a Mg-dependent methyl migration to produce 3-hydroxy-3-methyl-2-ketobutyrate (HMKB). In the reductase reaction, this 2-ketoacid undergoes a metal-dependent reduction by NADPH to yield (R)-2,3-dihydroxy-isovalerate. The chain is Ketol-acid reductoisomerase (NADP(+)) from Rippkaea orientalis (strain PCC 8801 / RF-1) (Cyanothece sp. (strain PCC 8801)).